A 464-amino-acid chain; its full sequence is Protein FAM90A26 (464 aa).

Disordered regions lie at residues 1 to 42, 70 to 293, 312 to 390, and 410 to 442; these read MMAC…DPRL, PPTL…AKRP, PFQI…DGAQ, and AAPS…VRVP. 2 stretches are compositionally biased toward basic and acidic residues: residues 74-83 and 97-114; these read GKKEGKENLK and NKDK…DPQR. The span at 178–197 shows a compositional bias: low complexity; that stretch reads SALASLSPLRKASLSSSSSL.

It belongs to the FAM90 family.

In Homo sapiens (Human), this protein is Protein FAM90A26.